A 101-amino-acid polypeptide reads, in one-letter code: Large ribosomal subunit protein bL28 (101 aa).

The protein belongs to the bacterial ribosomal protein bL28 family.

This chain is Large ribosomal subunit protein bL28, found in Rhodopseudomonas palustris (strain BisA53).